A 310-amino-acid polypeptide reads, in one-letter code: Malate dehydrogenase (310 aa).

NAD(+) contacts are provided by residues 7–12 (GAGNVG) and aspartate 32. Residues arginine 81 and arginine 87 each contribute to the substrate site. NAD(+) is bound by residues asparagine 94 and 117-119 (VSN). Residues asparagine 119 and arginine 150 each coordinate substrate. The active-site Proton acceptor is the histidine 174.

This sequence belongs to the LDH/MDH superfamily. MDH type 3 family.

It catalyses the reaction (S)-malate + NAD(+) = oxaloacetate + NADH + H(+). Functionally, catalyzes the reversible oxidation of malate to oxaloacetate. The polypeptide is Malate dehydrogenase (Chlorobium chlorochromatii (strain CaD3)).